The sequence spans 176 residues: Cytochrome c oxidase subunit 4 isoform 2, mitochondrial (176 aa).

The transit peptide at 1–28 (MLRLTAGRVRSLLAGRATAAFSTSSARM) directs the protein to the mitochondrion. Residues 29 to 106 (ASHDLEVAES…TYSEMKQPSS (78 aa)) lie on the Mitochondrial matrix side of the membrane. Residues 107–132 (EWKTVFGGIFIFLGFTGLVVWWQALY) traverse the membrane as a helical segment. Topologically, residues 133-176 (VYPPRPRTFDDEWKAKQLKRMLDMRVNPIEGFSAKWDYEKGQWK) are mitochondrial intermembrane.

This sequence belongs to the cytochrome c oxidase IV family. As to quaternary structure, component of the cytochrome c oxidase (complex IV, CIV), a multisubunit enzyme composed of 14 subunits. The complex is composed of a catalytic core of 3 subunits MT-CO1, MT-CO2 and MT-CO3, encoded in the mitochondrial DNA, and 11 supernumerary subunits COX4I, COX5A, COX5B, COX6A, COX6B, COX6C, COX7A, COX7B, COX7C, COX8 and NDUFA4, which are encoded in the nuclear genome. The complex exists as a monomer or a dimer and forms supercomplexes (SCs) in the inner mitochondrial membrane with NADH-ubiquinone oxidoreductase (complex I, CI) and ubiquinol-cytochrome c oxidoreductase (cytochrome b-c1 complex, complex III, CIII), resulting in different assemblies (supercomplex SCI(1)III(2)IV(1) and megacomplex MCI(2)III(2)IV(2)).

The protein resides in the mitochondrion inner membrane. It participates in energy metabolism; oxidative phosphorylation. Component of the cytochrome c oxidase, the last enzyme in the mitochondrial electron transport chain which drives oxidative phosphorylation. The respiratory chain contains 3 multisubunit complexes succinate dehydrogenase (complex II, CII), ubiquinol-cytochrome c oxidoreductase (cytochrome b-c1 complex, complex III, CIII) and cytochrome c oxidase (complex IV, CIV), that cooperate to transfer electrons derived from NADH and succinate to molecular oxygen, creating an electrochemical gradient over the inner membrane that drives transmembrane transport and the ATP synthase. Cytochrome c oxidase is the component of the respiratory chain that catalyzes the reduction of oxygen to water. Electrons originating from reduced cytochrome c in the intermembrane space (IMS) are transferred via the dinuclear copper A center (CU(A)) of subunit 2 and heme A of subunit 1 to the active site in subunit 1, a binuclear center (BNC) formed by heme A3 and copper B (CU(B)). The BNC reduces molecular oxygen to 2 water molecules using 4 electrons from cytochrome c in the IMS and 4 protons from the mitochondrial matrix. This is Cytochrome c oxidase subunit 4 isoform 2, mitochondrial from Thunnus obesus (Bigeye tuna).